A 243-amino-acid chain; its full sequence is Small ribosomal subunit protein uS2 (243 aa).

This sequence belongs to the universal ribosomal protein uS2 family.

This Aliivibrio salmonicida (strain LFI1238) (Vibrio salmonicida (strain LFI1238)) protein is Small ribosomal subunit protein uS2.